Reading from the N-terminus, the 291-residue chain is MIQVAGVNFEDPIVIASGIVPPTKEYMQNVCEKYEPSAITSKTLTYSPLEPHRSPTFVKISDNCYLNAIGLGNPGIQILRDLGEIKCKLIISIGGSNVNEYIDAVSKINDIPVMIELNVSSPNRRGFGESNLTYVEEIVKNVKSIVKKPVFVKLGPWDNIVEIAGRALSAGADGLTLINTLKGMLIDVEDFKPILSYGTGGISGKCIHALAVRVIHDVFKEYEPEIIGVGGVFDWRDAIELISVGAKLVGLGTVLVEKGFDVIREIREGIGTYLEEKGLKVEEIRGIGVKR.

Residues S17 and K42 to T43 each bind FMN. Substrate is bound by residues K42, N67–L71, and N118. N118 is a binding site for FMN. S121 acts as the Nucleophile in catalysis. Positions 153 and 178 each coordinate FMN. N179–T180 lines the substrate pocket. FMN is bound by residues G204, G230–G231, and G252–T253.

This sequence belongs to the dihydroorotate dehydrogenase family. Type 1 subfamily. As to quaternary structure, heterotetramer of 2 PyrK and 2 PyrD type B subunits. FMN serves as cofactor.

Its subcellular location is the cytoplasm. The catalysed reaction is (S)-dihydroorotate + NAD(+) = orotate + NADH + H(+). It participates in pyrimidine metabolism; UMP biosynthesis via de novo pathway; orotate from (S)-dihydroorotate (NAD(+) route): step 1/1. In terms of biological role, catalyzes the conversion of dihydroorotate to orotate with NAD(+) as electron acceptor. The sequence is that of Dihydroorotate dehydrogenase B (NAD(+)), catalytic subunit (pyrD) from Sulfolobus acidocaldarius (strain ATCC 33909 / DSM 639 / JCM 8929 / NBRC 15157 / NCIMB 11770).